We begin with the raw amino-acid sequence, 313 residues long: UbiA prenyltransferase claS (313 aa).

The next 2 helical transmembrane spans lie at 30-52 (FAGTMVLFWPFAWGLTMAARALL) and 57-79 (TFGTILACGFFASCLLHSAGCIW). The NDxxDxxxD motif lies at 81-88 (DILDQDFD). Asp-84 and Asp-88 together coordinate Mg(2+). 3 helical membrane passes run 99 to 121 (IASGAISNTGALIFMFAHLFILM), 131 to 148 (AWMIGIISIFPLPGIYPL), and 155 to 177 (WPQAWLGIALNTGIVMAWAYTTG). 2 residues coordinate Mg(2+): Asp-205 and Asp-209. Residues 205–209 (DKKDD) carry the DxxxD motif. The short motif at 205 to 209 (DKKDD) is the YxxxK element. A run of 3 helical transmembrane segments spans residues 227 to 247 (PVLSLFGSIIVGSLLISGILN), 250 to 270 (ELPYFLVSVGGGGLHLATQLW), and 293 to 313 (AIVWAGLLLDYAWAVGVGAIM).

The protein belongs to the UbiA prenyltransferase family. Mg(2+) serves as cofactor.

It localises to the membrane. The enzyme catalyses hydroquinone + (2E)-geranyl diphosphate = (2E)-geranylhydroquinone + diphosphate. It functions in the pathway secondary metabolite biosynthesis; terpenoid biosynthesis. Functionally, prenyltransferase; part of the gene cluster that mediates the biosynthesis of clavilactone A, a meroterpenoid that features a unique benzo-fused ten-membered carbocyclic ring unit with an alpha,beta-epoxy-gamma-lactone moiety, forming an intriguing 10/5/3 tricyclic nested skeleton. ClaR, ClaS and ClaT are sufficient to produce clavilactone A. Within the pathway, claS acts as an atypical UbiA prenyltransferase that transfers geranyl pyrophosphate (GPP) to hydroquinone (HYQ) instead of p-hydroxybenzoic acid (PHB), producing the first intermediate geranylhydroquinone. The cytochrome P450 monooxygenase claR then catalyzes the diradical coupling reaction between the intramolecular hydroquinone and allyl moieties to form the benzo-fused ten-membered carbocyclic ring unit of wigantol. Finally the cytochrome P450 monooxygenase claT exquisitely and stereoselectively assembles the alpha,beta-epoxy-gamma-lactone moiety, producing clavilactone A via arnebinol A. In Ampulloclitocybe clavipes (Club foot), this protein is UbiA prenyltransferase claS.